Here is a 69-residue protein sequence, read N- to C-terminus: uncharacterized protein (69 aa).

The stretch at 21–64 forms a coiled coil; that stretch reads LNLLKGGEEKISEVELKLDEMEKKMDSLLVQLEDLHRDNNDLAK.

This is an uncharacterized protein from Saccharomyces cerevisiae (strain ATCC 204508 / S288c) (Baker's yeast).